Reading from the N-terminus, the 74-residue chain is Ubiquitin-like protein FUBI (74 aa).

This sequence belongs to the ubiquitin family.

This chain is Ubiquitin-like protein FUBI (FAU), found in Bos taurus (Bovine).